Reading from the N-terminus, the 373-residue chain is GDSL esterase/lipase LIP-4 (373 aa).

Positions 1-32 (MATLFLYSNTFSFFFITLVSLALLILRQPSRA) are cleaved as a signal peptide. S47 (nucleophile) is an active-site residue. The N-linked (GlcNAc...) asparagine glycan is linked to N93. Residues D339 and H342 contribute to the active site.

It belongs to the 'GDSL' lipolytic enzyme family.

It localises to the secreted. The chain is GDSL esterase/lipase LIP-4 (LIP4) from Arabidopsis thaliana (Mouse-ear cress).